We begin with the raw amino-acid sequence, 341 residues long: Ribosomal RNA small subunit methyltransferase C (341 aa).

It belongs to the methyltransferase superfamily. RsmC family. As to quaternary structure, monomer.

Its subcellular location is the cytoplasm. It catalyses the reaction guanosine(1207) in 16S rRNA + S-adenosyl-L-methionine = N(2)-methylguanosine(1207) in 16S rRNA + S-adenosyl-L-homocysteine + H(+). Functionally, specifically methylates the guanine in position 1207 of 16S rRNA in the 30S particle. This Shewanella pealeana (strain ATCC 700345 / ANG-SQ1) protein is Ribosomal RNA small subunit methyltransferase C.